Consider the following 146-residue polypeptide: Histone H2B (146 aa).

Positions 1–16 (MAPRADKKPAEKKPGA) are enriched in basic and acidic residues. The interval 1–52 (MAPRADKKPAEKKPGAEKTPVAEKAPAEKKPRAGKKLPRDAGAAGDKKKKRA) is disordered. 3 positions are modified to N6-acetyllysine: Lys7, Lys35, and Lys36. A Glycyl lysine isopeptide (Lys-Gly) (interchain with G-Cter in ubiquitin) cross-link involves residue Lys142.

This sequence belongs to the histone H2B family. As to quaternary structure, the nucleosome is a histone octamer containing two molecules each of H2A, H2B, H3 and H4 assembled in one H3-H4 heterotetramer and two H2A-H2B heterodimers. The octamer wraps approximately 147 bp of DNA. Post-translationally, can be acetylated to form H2BK6ac, H2BK33ac and H2BK34ac. Monoubiquitinated to form H2BK143ub1; may give a specific tag for epigenetic transcriptional activation.

The protein localises to the nucleus. Its subcellular location is the chromosome. Core component of nucleosome. Nucleosomes wrap and compact DNA into chromatin, limiting DNA accessibility to the cellular machineries which require DNA as a template. Histones thereby play a central role in transcription regulation, DNA repair, DNA replication and chromosomal stability. DNA accessibility is regulated via a complex set of post-translational modifications of histones, also called histone code, and nucleosome remodeling. The sequence is that of Histone H2B (HIS2B) from Nicotiana tabacum (Common tobacco).